The chain runs to 275 residues: 4-hydroxy-3-methylbut-2-enyl diphosphate reductase (275 aa).

Residue cysteine 12 coordinates [4Fe-4S] cluster. (2E)-4-hydroxy-3-methylbut-2-enyl diphosphate contacts are provided by histidine 40 and histidine 70. Dimethylallyl diphosphate is bound by residues histidine 40 and histidine 70. Isopentenyl diphosphate contacts are provided by histidine 40 and histidine 70. Residue cysteine 92 participates in [4Fe-4S] cluster binding. Histidine 119 lines the (2E)-4-hydroxy-3-methylbut-2-enyl diphosphate pocket. Histidine 119 is a dimethylallyl diphosphate binding site. Position 119 (histidine 119) interacts with isopentenyl diphosphate. The Proton donor role is filled by glutamate 121. Residue threonine 151 participates in (2E)-4-hydroxy-3-methylbut-2-enyl diphosphate binding. [4Fe-4S] cluster is bound at residue cysteine 181. Residues serine 209, serine 210, asparagine 211, and serine 251 each contribute to the (2E)-4-hydroxy-3-methylbut-2-enyl diphosphate site. 4 residues coordinate dimethylallyl diphosphate: serine 209, serine 210, asparagine 211, and serine 251. Isopentenyl diphosphate-binding residues include serine 209, serine 210, asparagine 211, and serine 251.

This sequence belongs to the IspH family. Requires [4Fe-4S] cluster as cofactor.

It catalyses the reaction isopentenyl diphosphate + 2 oxidized [2Fe-2S]-[ferredoxin] + H2O = (2E)-4-hydroxy-3-methylbut-2-enyl diphosphate + 2 reduced [2Fe-2S]-[ferredoxin] + 2 H(+). It carries out the reaction dimethylallyl diphosphate + 2 oxidized [2Fe-2S]-[ferredoxin] + H2O = (2E)-4-hydroxy-3-methylbut-2-enyl diphosphate + 2 reduced [2Fe-2S]-[ferredoxin] + 2 H(+). It functions in the pathway isoprenoid biosynthesis; dimethylallyl diphosphate biosynthesis; dimethylallyl diphosphate from (2E)-4-hydroxy-3-methylbutenyl diphosphate: step 1/1. The protein operates within isoprenoid biosynthesis; isopentenyl diphosphate biosynthesis via DXP pathway; isopentenyl diphosphate from 1-deoxy-D-xylulose 5-phosphate: step 6/6. In terms of biological role, catalyzes the conversion of 1-hydroxy-2-methyl-2-(E)-butenyl 4-diphosphate (HMBPP) into a mixture of isopentenyl diphosphate (IPP) and dimethylallyl diphosphate (DMAPP). Acts in the terminal step of the DOXP/MEP pathway for isoprenoid precursor biosynthesis. This is 4-hydroxy-3-methylbut-2-enyl diphosphate reductase from Thermotoga sp. (strain RQ2).